The primary structure comprises 495 residues: Glucose-6-phosphate 1-dehydrogenase (495 aa).

Residue Lys51 forms an Isoglutamyl lysine isopeptide (Lys-Gln) (interchain with Q-Cter in protein Pup) linkage. NADP(+) contacts are provided by residues Asp94 to Leu95 and Lys154. Substrate-binding residues include His184, Lys188, Glu222, and Asp241. The active-site Proton acceptor is His246. Residue Lys345 coordinates substrate.

This sequence belongs to the glucose-6-phosphate dehydrogenase family.

The catalysed reaction is D-glucose 6-phosphate + NADP(+) = 6-phospho-D-glucono-1,5-lactone + NADPH + H(+). It functions in the pathway carbohydrate degradation; pentose phosphate pathway; D-ribulose 5-phosphate from D-glucose 6-phosphate (oxidative stage): step 1/3. In terms of biological role, catalyzes the oxidation of glucose 6-phosphate to 6-phosphogluconolactone. The protein is Glucose-6-phosphate 1-dehydrogenase of Mycolicibacterium smegmatis (strain ATCC 700084 / mc(2)155) (Mycobacterium smegmatis).